The primary structure comprises 363 residues: Endopolygalacturonase 1 (363 aa).

An N-terminal signal peptide occupies residues 1–17 (MVSYLFVLGALASVAIA). A propeptide spanning residues 18–26 (SPVPELKAR) is cleaved from the precursor. Cysteines 29 and 44 form a disulfide. PbH1 repeat units lie at residues 188 to 209 (STGV…AVNS), 210 to 230 (GTNI…SIGS), 239 to 260 (VKSV…RIKT), and 268 to 290 (VSDI…VIEQ). Asp202 acts as the Proton donor in catalysis. Cys204 and Cys220 are disulfide-bonded. The N-linked (GlcNAc...) asparagine glycan is linked to Asn212. The active site involves His224. Intrachain disulfides connect Cys330/Cys333 and Cys352/Cys363.

This sequence belongs to the glycosyl hydrolase 28 family.

It is found in the secreted. It carries out the reaction (1,4-alpha-D-galacturonosyl)n+m + H2O = (1,4-alpha-D-galacturonosyl)n + (1,4-alpha-D-galacturonosyl)m.. In terms of biological role, involved in maceration and soft-rotting of plant tissue. Hydrolyzes the 1,4-alpha glycosidic bonds of de-esterified pectate in the smooth region of the plant cell wall. The sequence is that of Endopolygalacturonase 1 (PG1) from Colletotrichum lindemuthianum (Bean anthracnose fungus).